The chain runs to 139 residues: uncharacterized protein (139 aa).

A run of 3 helical transmembrane segments spans residues 19-39 (CIIF…FILG), 64-84 (IFNV…FNLF), and 89-109 (AITI…WILG).

Its subcellular location is the cell membrane. This is an uncharacterized protein from Methanocaldococcus jannaschii (strain ATCC 43067 / DSM 2661 / JAL-1 / JCM 10045 / NBRC 100440) (Methanococcus jannaschii).